A 50-amino-acid polypeptide reads, in one-letter code: Large ribosomal subunit protein bL33A (50 aa).

It belongs to the bacterial ribosomal protein bL33 family.

The chain is Large ribosomal subunit protein bL33A (rpmG1) from Mycoplasmopsis pulmonis (strain UAB CTIP) (Mycoplasma pulmonis).